Here is a 591-residue protein sequence, read N- to C-terminus: Lysyl oxidase homolog 1 (591 aa).

The first 22 residues, 1-22 (MALALTGWQLVWGACVCVLVHG), serve as a signal peptide directing secretion. The propeptide occupies 23 to 91 (QQAPPGQGSD…PRRRGGLRRR (69 aa)). Disordered stretches follow at residues 77–107 (APQAPPRRRGGLRRRQAPSLPLPGRVGSDTV) and 233–373 (EYGG…RLSV). Residues 82–92 (PRRRGGLRRRQ) are compositionally biased toward basic residues. A compositionally biased stretch (gly residues) spans 298-313 (NGGGGGGTYGGGGGDP). The interval 319 to 386 (PPYGNMPPEA…YRPNQNGRGL (68 aa)) is interaction with FBLN5. The tract at residues 387–591 (PDLVPDPNYV…STTNCKIVQS (205 aa)) is lysyl-oxidase like. Intrachain disulfides connect Cys412–Cys418, Cys465–Cys514, Cys498–Cys504, Cys525–Cys535, and Cys572–Cys586. 3 residues coordinate Cu cation: His466, His468, and His470. Residues 494–529 (KASFCLEDSTCDFGNLKRYACTSHTQGLSPGCYDTY) constitute a cross-link (lysine tyrosylquinone (Lys-Tyr)). Tyr529 carries the 2',4',5'-topaquinone modification.

Belongs to the lysyl oxidase family. In terms of assembly, interacts (via propeptide) with EFEMP2. Interacts with FBLN5. Cu cation serves as cofactor. It depends on lysine tyrosylquinone residue as a cofactor. The lysine tyrosylquinone cross-link (LTQ) is generated by condensation of the epsilon-amino group of a lysine with a topaquinone produced by oxidation of tyrosine. In terms of processing, proteolytic processing by a furin-like protease causes removal of N-terminal propeptide resulting in an enzyme largely inactive, but further proteolytic processing by BMP1 results in enzyme activation.

The protein resides in the secreted. The protein localises to the extracellular space. Its subcellular location is the extracellular matrix. The catalysed reaction is L-lysyl-[protein] + O2 + H2O = (S)-2-amino-6-oxohexanoyl-[protein] + H2O2 + NH4(+). Functionally, catalyzes the oxidative deamination of lysine and hydroxylysine residues in collagen and elastin, resulting in the formation of covalent cross-linkages, and the stabilization of collagen and elastin fibers. Essential for the elastic fiber homeostasis and for their maintenance at adult age. This chain is Lysyl oxidase homolog 1 (LOXL1), found in Bos taurus (Bovine).